The primary structure comprises 412 residues: Putative competence-damage inducible protein (412 aa).

It belongs to the CinA family.

The polypeptide is Putative competence-damage inducible protein (Bacillus cereus (strain B4264)).